We begin with the raw amino-acid sequence, 159 residues long: Phosphopantetheine adenylyltransferase (159 aa).

Ser8 lines the substrate pocket. ATP contacts are provided by residues 8-9 (SF) and His16. Lys40, Thr72, and Arg86 together coordinate substrate. ATP-binding positions include 87–89 (GLR), Glu97, and 122–128 (YSFLSSS).

The protein belongs to the bacterial CoaD family. In terms of assembly, homohexamer. Mg(2+) is required as a cofactor.

The protein localises to the cytoplasm. The catalysed reaction is (R)-4'-phosphopantetheine + ATP + H(+) = 3'-dephospho-CoA + diphosphate. The protein operates within cofactor biosynthesis; coenzyme A biosynthesis; CoA from (R)-pantothenate: step 4/5. Reversibly transfers an adenylyl group from ATP to 4'-phosphopantetheine, yielding dephospho-CoA (dPCoA) and pyrophosphate. This chain is Phosphopantetheine adenylyltransferase, found in Synechocystis sp. (strain ATCC 27184 / PCC 6803 / Kazusa).